Here is an 897-residue protein sequence, read N- to C-terminus: High molecular weight rhoptry protein 3 (897 aa).

Residues 1–24 form the signal peptide; sequence MRSKHLVTLFIITFLSFSTVKVWG. Cystine bridges form between cysteine 157–cysteine 231, cysteine 244–cysteine 253, cysteine 262–cysteine 276, cysteine 421–cysteine 620, and cysteine 475–cysteine 536. A helical transmembrane segment spans residues 597 to 615; sequence FVLYFISIISVLYINEYYY. Disordered stretches follow at residues 788-845 and 859-897; these read KEQS…SNLK and QLDK…ENEL. Residues 792 to 801 are compositionally biased toward polar residues; that stretch reads KSTSAASTSD. Residues 802–817 are compositionally biased toward low complexity; it reads ELSGSEGPSTESTSTG. A Phosphoserine modification is found at serine 804. The span at 820–832 shows a compositional bias: basic and acidic residues; that stretch reads GEDKTTDNTYKEM. The segment covering 865–876 has biased composition (basic residues); sequence PKKKKSKRKKKR. A compositionally biased stretch (basic and acidic residues) spans 877 to 889; that stretch reads DSSSDRILLEESK.

In terms of assembly, component of the RhopH complex, composed of CLAG3.1/CLAG3.2, RhopH2 and RhopH3 with a 1:1:1 subunit stoichiometry. Interacts with CLAG3.1/CLAG3.2. Interacts with CDPK1; the interaction promotes RhopH3 phosphorylation in merozoites. Post-translationally, proteolytically cleaved near C-terminus.

It localises to the host cell membrane. It is found in the parasitophorous vacuole membrane. Its subcellular location is the cytoplasmic vesicle. The protein resides in the secretory vesicle. The protein localises to the rhoptry. Its function is as follows. Participates in the formation of new permeability pathways in Plasmodium-infected erythrocytes enabling the uptake of nutrients from the blood plasma. Required for maintaining invasion capacity of merozoites. Required for the trophozoite to schizont developmental transition of the intracellular parasite. This chain is High molecular weight rhoptry protein 3, found in Plasmodium falciparum.